Consider the following 727-residue polypeptide: Pentatricopeptide repeat-containing protein At2g33680 (727 aa).

17 PPR repeats span residues 13-47 (HTST…GAST), 48-78 (CIQH…IICK), 79-116 (DVVS…DILP), 117-150 (NAYT…MSSF), 152-182 (DIYV…MPER), 183-213 (NTYT…FLRE), 220-254 (SDYV…GLLG), 255-285 (FVAL…SGDR), 286-320 (NSIT…GIKP), 321-355 (SEYT…GFER), 356-386 (HLFA…LQER), 387-421 (DVAL…GIIP), 422-456 (NDPT…GFGL), 457-487 (EVPI…TPNK), 488-522 (DVVS…GMEP), 523-553 (DDVT…MSDQ), and 559-593 (KVDH…HGLC). The interval 594-669 (LWRILLSACK…EVGCSWIELK (76 aa)) is type E motif. The interval 670–700 (NQYHVFVVGDTMHPMIEETKDLVCLVSRQMI) is type E(+) motif.

The protein belongs to the PPR family. PCMP-E subfamily.

The chain is Pentatricopeptide repeat-containing protein At2g33680 (PCMP-E19) from Arabidopsis thaliana (Mouse-ear cress).